The sequence spans 236 residues: MTRRYWNINLEEMMEAGVHFGHGIKKWNPRMAPYIYANRKGIHITNLTKTARFLAEACDLVFDAASRGRQFLIVGTKKQAAALVARAAIKARCHYVNKKWLGGMLTNWSTTETRLHQFRDLRTEQKTGRLNRLPKRDAAILKRQLSHLQTYLGGIKYMTGLPDIVIILDQQEEYTALRECITLGIPTICLIDTDCDPDLADLPIPANDDAMASIRLILNKLVFAICEGRSSSIRNP.

The protein belongs to the universal ribosomal protein uS2 family.

The protein resides in the plastid. Its subcellular location is the chloroplast. This Oenothera parviflora (Small-flowered evening primrose) protein is Small ribosomal subunit protein uS2c (rps2).